A 237-amino-acid polypeptide reads, in one-letter code: Pyridoxal phosphate homeostasis protein (237 aa).

The residue at position 35 (lysine 35) is an N6-(pyridoxal phosphate)lysine.

It belongs to the pyridoxal phosphate-binding protein YggS/PROSC family.

Functionally, pyridoxal 5'-phosphate (PLP)-binding protein, which is involved in PLP homeostasis. The protein is Pyridoxal phosphate homeostasis protein of Haemophilus influenzae (strain ATCC 51907 / DSM 11121 / KW20 / Rd).